The chain runs to 830 residues: Kinesin-like protein KIN-14B (830 aa).

Positions 56–97 form a coiled coil; that stretch reads ENISDDNTESEAKVQKIQDELVSLNAQLKQITLQRREALNNY. One can recognise a Kinesin motor domain in the interval 103 to 425; that stretch reads NIRVFCRIRP…LGFATRVRSI (323 aa). 182–189 lines the ATP pocket; it reads GQTGSGKT. Residues 434 to 476 are a coiled coil; the sequence is EMKARKETLLIDLGQKVNDLEHECEDIRRKIKNLEESMEHLTG.

Belongs to the TRAFAC class myosin-kinesin ATPase superfamily. Kinesin family. KIN-14 subfamily.

The chain is Kinesin-like protein KIN-14B from Oryza sativa subsp. japonica (Rice).